The sequence spans 253 residues: Transmembrane protein 69 (253 aa).

5 consecutive transmembrane segments (helical) span residues 104-124 (ALYL…LMNV), 137-157 (VAYG…FAIP), 165-185 (DWMN…ALLF), 192-212 (AAVL…ALLP), and 223-243 (AILT…SSVY).

The protein localises to the membrane. This Xenopus tropicalis (Western clawed frog) protein is Transmembrane protein 69 (tmem69).